Here is a 588-residue protein sequence, read N- to C-terminus: ustiloxin B cluster transcription factor ustR (588 aa).

Residues 11-38 (CWTCRLRRKKCNEDGQPCSNCEARGVFC) constitute a DNA-binding region (zn(2)-C6 fungal-type). The interval 68-92 (RTRRARATPTNSINGEPRRPSIDMN) is disordered.

It is found in the nucleus. Transcription factor that regulates the expression of the gene cluster that mediates the biosynthesis of ustiloxin B, an antimitotic tetrapeptide. This Aspergillus flavus (strain ATCC 200026 / FGSC A1120 / IAM 13836 / NRRL 3357 / JCM 12722 / SRRC 167) protein is ustiloxin B cluster transcription factor ustR.